A 213-amino-acid polypeptide reads, in one-letter code: Urease accessory protein UreE (213 aa).

The segment at E170–R213 is disordered. Residues H182–H200 show a composition bias toward basic and acidic residues.

It belongs to the UreE family.

The protein resides in the cytoplasm. Involved in urease metallocenter assembly. Binds nickel. Probably functions as a nickel donor during metallocenter assembly. The polypeptide is Urease accessory protein UreE (Burkholderia mallei (strain NCTC 10229)).